A 1214-amino-acid polypeptide reads, in one-letter code: MAIIKRGARNKTAQEPAKRSAKIKKATYDSGKKKEVGVSDLTLLSTISDEAINENLKKRFTNGTIYTYIGHVLISVNPFRDLGIYTDAVLESYKGKNRLEVPPHVFAIAESMYYNLKAYNENQCVIISGESGAGKTEAAKRIMQYIASASESNSESIGKIKDMVLATNPLLESFGCAKTLRNNNSSRHGKYLEIRFNNQFEPCAGNITNYLLEKQRVVSQIKEERNFHIFYQFTKGASENYRQTFGVQKPEQYIYTSAAGCTSVDTIDDVKDYEDTLKAMQVIGLSQDEQDQIFRMLSSILWVGNISFVENEEGNAQVRDTSVTDFVAYLLQIDSQVLMKALVERTMETSHGMRRGSVYHVPLNIVQATAVRDALAKAIYNNMFDWIVERVNISLQAYPGADKSIGILDIYGFEIFEHNSFEQICINYVNEKLQQIFIQLTLKSEQETYEREQIQWTPIKFFDNKIVCDLIESRRPPGIFAAMNDSVATAHADSDAADQAFSQRLNLFSTNPHFALRSNKFVIKHYAGDVTYDVNGITDKNKDQLQRDLVELIATSSNAFLRTIFPDNVDKDSKRRPPTAGDKIIKSANELVETLSKAQPSYIRTIKPNQTKSPNDYDDQQVLHQVKYLGLKENVRIRRAGFAYRQVFDKFVERFYLLSPSCSYAGDYTWQGETLEAVKLILKEASIPEKEYQVGVSQVFIKTPETLFALEHMRDKYWYNMAARIQRAWRRFLQRRIDSATRIQRAIREKKGGNKYEKLRDEGSKILAARKERRTMSLLGFRAFMGDYLLCNERKSRGAYIKKQAGISDKVVFSIKGEQLQSKFGRSSVRVKKVLILTHSHLYIIGQSMVQNSVQYTTEYKIDVNKIAGVSMTNLQDDWVAINLSNSTQPDPLLHTFFKTELVTQLKKLNGRIQVKIGTVIEYQKKPGKMHKVKSQVSEATPKYNDNYKSGTILVRRGHPANSPQKKKPKKGKGHSKHHSTSTSAPRSSVQSSQPSAPVSRKTKKPAPPPPGSKKLSSSVAQTASRPQPVANSARGAAQPQATPQPAQVTQPQQKKVAPPPPPPPPMQSSEPKYEAAYDFPGSGSPSELPLKKGEVVYITREEPSGWSLAKTLDGSREGWVPTNYVVKHQGGSVPPPPPAPAAVQATQAANVTSTPVSSSQSETATTATPASVAAAQPNFSDGLASALAARANKMRVESDGEDNGNDDDDDDDW.

Positions 1–21 are disordered; the sequence is MAIIKRGARNKTAQEPAKRSA. Positions 36 to 715 constitute a Myosin motor domain; that stretch reads VGVSDLTLLS…TLFALEHMRD (680 aa). An ATP-binding site is contributed by 129 to 136; that stretch reads GESGAGKT. At S357 the chain carries Phosphoserine. Positions 404 to 486 are actin-binding; sequence SIGILDIYGF…PGIFAAMNDS (83 aa). 2 consecutive IQ domains span residues 719–739 and 740–765; these read YNMA…RIDS and ATRI…EGSK. A TH1 domain is found at 771-961; the sequence is KERRTMSLLG…TILVRRGHPA (191 aa). Disordered regions lie at residues 926 to 1090, 1129 to 1177, and 1193 to 1214; these read KPGK…SELP, HQGG…AAAQ, and NKMR…DDDW. The segment covering 965 to 980 has biased composition (basic residues); the sequence is QKKKPKKGKGHSKHHS. 2 stretches are compositionally biased toward low complexity: residues 981–1000 and 1037–1057; these read TSTS…APVS and AAQP…QKKV. A compositionally biased stretch (pro residues) spans 1058–1067; it reads APPPPPPPPM. An SH3 domain is found at 1069 to 1131; the sequence is SSEPKYEAAY…PTNYVVKHQG (63 aa). Residues 1157 to 1177 show a composition bias toward low complexity; the sequence is VSSSQSETATTATPASVAAAQ. A compositionally biased stretch (acidic residues) spans 1200 to 1214; sequence DGEDNGNDDDDDDDW.

Belongs to the TRAFAC class myosin-kinesin ATPase superfamily. Myosin family. Phosphorylation of the TEDS site (Ser-357) is required for the polarization of the actin cytoskeleton. Phosphorylation probably activates the myosin-I ATPase activity.

It is found in the cytoplasm. The protein resides in the cytoskeleton. It localises to the actin patch. In terms of biological role, type-I myosin implicated in the organization of the actin cytoskeleton. Required for proper actin cytoskeleton polarization. At the cell cortex, assembles in patch-like structures together with proteins from the actin-polymerizing machinery and promotes actin assembly. Functions as actin nucleation-promoting factor (NPF) for the Arp2/3 complex. The sequence is that of Myosin-1 (MYO1) from Vanderwaltozyma polyspora (strain ATCC 22028 / DSM 70294 / BCRC 21397 / CBS 2163 / NBRC 10782 / NRRL Y-8283 / UCD 57-17) (Kluyveromyces polysporus).